The sequence spans 1008 residues: Probable beta-galactosidase B (1008 aa).

Positions 1–18 are cleaved as a signal peptide; that stretch reads MLLQSLFAWALAIGPCIA. Asn-20 and Asn-23 each carry an N-linked (GlcNAc...) asparagine glycan. Substrate is bound at residue Tyr-87. Residue Asn-108 is glycosylated (N-linked (GlcNAc...) asparagine). Positions 132, 133, 134, and 192 each coordinate substrate. Catalysis depends on Glu-193, which acts as the Proton donor. A glycan (N-linked (GlcNAc...) asparagine) is linked at Asn-208. Residue Tyr-262 coordinates substrate. Cysteines 268 and 321 form a disulfide. Asn-269 is a glycosylation site (N-linked (GlcNAc...) asparagine). The active-site Nucleophile is Glu-305. Tyr-370 provides a ligand contact to substrate. N-linked (GlcNAc...) asparagine glycans are attached at residues Asn-453, Asn-594, Asn-624, Asn-681, Asn-703, Asn-782, Asn-788, Asn-816, Asn-826, and Asn-879.

This sequence belongs to the glycosyl hydrolase 35 family.

Its subcellular location is the secreted. The enzyme catalyses Hydrolysis of terminal non-reducing beta-D-galactose residues in beta-D-galactosides.. Cleaves beta-linked terminal galactosyl residues from gangliosides, glycoproteins, and glycosaminoglycans. The sequence is that of Probable beta-galactosidase B (lacB) from Sclerotinia sclerotiorum (strain ATCC 18683 / 1980 / Ss-1) (White mold).